A 191-amino-acid polypeptide reads, in one-letter code: Protein GrpE (191 aa).

Residues 1–14 are compositionally biased toward polar residues; sequence MEDQKQTPSNQTAT. The segment at 1–35 is disordered; the sequence is MEDQKQTPSNQTATPAGDEATSTAAASPETGAPDT. Residues 19-35 show a composition bias toward low complexity; the sequence is EATSTAAASPETGAPDT.

It belongs to the GrpE family. Homodimer.

The protein localises to the cytoplasm. Its function is as follows. Participates actively in the response to hyperosmotic and heat shock by preventing the aggregation of stress-denatured proteins, in association with DnaK and GrpE. It is the nucleotide exchange factor for DnaK and may function as a thermosensor. Unfolded proteins bind initially to DnaJ; upon interaction with the DnaJ-bound protein, DnaK hydrolyzes its bound ATP, resulting in the formation of a stable complex. GrpE releases ADP from DnaK; ATP binding to DnaK triggers the release of the substrate protein, thus completing the reaction cycle. Several rounds of ATP-dependent interactions between DnaJ, DnaK and GrpE are required for fully efficient folding. The polypeptide is Protein GrpE (Cupriavidus taiwanensis (strain DSM 17343 / BCRC 17206 / CCUG 44338 / CIP 107171 / LMG 19424 / R1) (Ralstonia taiwanensis (strain LMG 19424))).